We begin with the raw amino-acid sequence, 176 residues long: 3-hydroxydecanoyl-[acyl-carrier-protein] dehydratase (176 aa).

Residue His-71 is part of the active site.

The protein belongs to the thioester dehydratase family. FabA subfamily. In terms of assembly, homodimer.

The protein resides in the cytoplasm. The catalysed reaction is a (3R)-hydroxyacyl-[ACP] = a (2E)-enoyl-[ACP] + H2O. It catalyses the reaction (3R)-hydroxydecanoyl-[ACP] = (2E)-decenoyl-[ACP] + H2O. It carries out the reaction (2E)-decenoyl-[ACP] = (3Z)-decenoyl-[ACP]. The protein operates within lipid metabolism; fatty acid biosynthesis. Its function is as follows. Necessary for the introduction of cis unsaturation into fatty acids. Catalyzes the dehydration of (3R)-3-hydroxydecanoyl-ACP to E-(2)-decenoyl-ACP and then its isomerization to Z-(3)-decenoyl-ACP. Can catalyze the dehydratase reaction for beta-hydroxyacyl-ACPs with saturated chain lengths up to 16:0, being most active on intermediate chain length. In Rhodopseudomonas palustris (strain BisA53), this protein is 3-hydroxydecanoyl-[acyl-carrier-protein] dehydratase.